We begin with the raw amino-acid sequence, 73 residues long: MAKEELIEFGGVVSEALPDNRYRVTLENGVEIWAYASGKMQKHRIRILAGDRVTLEMSPYDLTKGRINFRHKS.

Residues 1 to 72 (MAKEELIEFG…TKGRINFRHK (72 aa)) enclose the S1-like domain.

Belongs to the IF-1 family. Component of the 30S ribosomal translation pre-initiation complex which assembles on the 30S ribosome in the order IF-2 and IF-3, IF-1 and N-formylmethionyl-tRNA(fMet); mRNA recruitment can occur at any time during PIC assembly.

The protein localises to the cytoplasm. Its function is as follows. One of the essential components for the initiation of protein synthesis. Stabilizes the binding of IF-2 and IF-3 on the 30S subunit to which N-formylmethionyl-tRNA(fMet) subsequently binds. Helps modulate mRNA selection, yielding the 30S pre-initiation complex (PIC). Upon addition of the 50S ribosomal subunit IF-1, IF-2 and IF-3 are released leaving the mature 70S translation initiation complex. This is Translation initiation factor IF-1 1 from Cupriavidus metallidurans (strain ATCC 43123 / DSM 2839 / NBRC 102507 / CH34) (Ralstonia metallidurans).